A 290-amino-acid polypeptide reads, in one-letter code: ATP synthase gamma chain (290 aa).

This sequence belongs to the ATPase gamma chain family. In terms of assembly, F-type ATPases have 2 components, CF(1) - the catalytic core - and CF(0) - the membrane proton channel. CF(1) has five subunits: alpha(3), beta(3), gamma(1), delta(1), epsilon(1). CF(0) has three main subunits: a, b and c.

The protein resides in the cell inner membrane. Functionally, produces ATP from ADP in the presence of a proton gradient across the membrane. The gamma chain is believed to be important in regulating ATPase activity and the flow of protons through the CF(0) complex. This is ATP synthase gamma chain from Bacteroides fragilis (strain ATCC 25285 / DSM 2151 / CCUG 4856 / JCM 11019 / LMG 10263 / NCTC 9343 / Onslow / VPI 2553 / EN-2).